Here is a 184-residue protein sequence, read N- to C-terminus: Thiosulfate dehydrogenase [quinone] large subunit (184 aa).

Transmembrane regions (helical) follow at residues 21–38 (LFPV…GGLR), 86–106 (FLTV…IGLL), 109–129 (LAAL…WLGS), and 137–157 (IGAL…GRVW).

As to quaternary structure, heterodimer of a large and a small subunit in a 2:2 stoichiometry. TQO may associate with the terminal oxidase formed by doxBCE.

The protein localises to the cell membrane. It carries out the reaction 6-decylubiquinone + 2 thiosulfate = 6-decylubiquinol + tetrathionate. With respect to regulation, inhibited by sulfite, metabisulfite and dithonite. In terms of biological role, TQO plays a role in sulfur oxidation and is proposed to couple sulfur oxidation to dioxygen reduction; caldariellaquinone or sulfolobus quinone seem to serve to transfer electrons to the electron transport chain terminal oxidase formed by DoxBCE. In Acidianus ambivalens (Desulfurolobus ambivalens), this protein is Thiosulfate dehydrogenase [quinone] large subunit (doxD).